The following is a 110-amino-acid chain: Nucleoid-associated protein bbp_426 (110 aa).

It belongs to the YbaB/EbfC family. As to quaternary structure, homodimer.

Its subcellular location is the cytoplasm. The protein resides in the nucleoid. In terms of biological role, binds to DNA and alters its conformation. May be involved in regulation of gene expression, nucleoid organization and DNA protection. This is Nucleoid-associated protein bbp_426 from Buchnera aphidicola subsp. Baizongia pistaciae (strain Bp).